We begin with the raw amino-acid sequence, 520 residues long: Sterile alpha motif domain-containing protein 3 (520 aa).

The region spanning 4-71 (WSVEQVCSWL…KYKQNTQGLK (68 aa)) is the SAM domain. Residues 85-114 (TEAARDYRDEESSSPARHGEQMPSFYPAEN) are disordered.

In Homo sapiens (Human), this protein is Sterile alpha motif domain-containing protein 3 (SAMD3).